The following is a 122-amino-acid chain: Urocortin (122 aa).

Positions 1–25 are cleaved as a signal peptide; it reads MRQRGRATLLVALLLLVQLRPESSQ. A propeptide spanning residues 26–80 is cleaved from the precursor; sequence WSPAAAAANVVQDPNLRWNPGVRNQGGGVRALLLLLAERFPRRAGSEPAGERQRR. Valine amide is present on V120.

Belongs to the sauvagine/corticotropin-releasing factor/urotensin I family. Interacts with CRHR1 and CRHR2 (via their N-terminal extracellular domain).

The protein resides in the secreted. In terms of biological role, acts in vitro to stimulate the secretion of adrenocorticotropic hormone (ACTH). Binds with high affinity to CRF receptor types 1, 2-alpha, and 2-beta. Plays a role in the establishment of normal hearing thresholds. Reduces food intake and regulates ghrelin levels in gastric body and plasma. This is Urocortin (Ucn) from Rattus norvegicus (Rat).